Here is a 605-residue protein sequence, read N- to C-terminus: YTH domain-containing protein ECT4 (605 aa).

Disordered stretches follow at residues 249-274 (GVASSYSKANNNVPATRNQNSSSNSH) and 357-384 (ELNRGPRAKGTKATEEVSSEEVKKQTFD). The span at 256-274 (KANNNVPATRNQNSSSNSH) shows a compositional bias: polar residues. Basic and acidic residues predominate over residues 368–383 (KATEEVSSEEVKKQTF). The YTH domain maps to 414–551 (AKFFIIKSYS…EQGLKVVKIF (138 aa)). RNA-binding positions include 420–422 (KSY), aspartate 426, 436–437 (WA), asparagine 469, tryptophan 493, tryptophan 498, and tryptophan 506. The disordered stretch occupies residues 580-605 (KQQQSQKQVWEGKTNDEKPGTVDSTM).

In terms of tissue distribution, expressed in the shoot apex, at the sites of leaf formation, and in emerging leaves.

It localises to the cytoplasm. Specifically recognizes and binds N6-methyladenosine (m6A)-containing RNAs, and regulates mRNA stability. M6A is a modification present at internal sites of mRNAs and some non-coding RNAs and plays a role in mRNA stability and processing. Required for the correct timing of leaf formation and normal leaf morphology. This is YTH domain-containing protein ECT4 from Arabidopsis thaliana (Mouse-ear cress).